The following is a 156-amino-acid chain: 6,7-dimethyl-8-ribityllumazine synthase (156 aa).

5-amino-6-(D-ribitylamino)uracil-binding positions include Phe-22, 57–59 (AYE), and 81–83 (TVI). 86-87 (GT) lines the (2S)-2-hydroxy-3-oxobutyl phosphate pocket. The active-site Proton donor is His-89. Residue Phe-114 participates in 5-amino-6-(D-ribitylamino)uracil binding. Residue Arg-128 coordinates (2S)-2-hydroxy-3-oxobutyl phosphate.

It belongs to the DMRL synthase family. As to quaternary structure, forms an icosahedral capsid composed of 60 subunits, arranged as a dodecamer of pentamers.

The enzyme catalyses (2S)-2-hydroxy-3-oxobutyl phosphate + 5-amino-6-(D-ribitylamino)uracil = 6,7-dimethyl-8-(1-D-ribityl)lumazine + phosphate + 2 H2O + H(+). The protein operates within cofactor biosynthesis; riboflavin biosynthesis; riboflavin from 2-hydroxy-3-oxobutyl phosphate and 5-amino-6-(D-ribitylamino)uracil: step 1/2. In terms of biological role, catalyzes the formation of 6,7-dimethyl-8-ribityllumazine by condensation of 5-amino-6-(D-ribitylamino)uracil with 3,4-dihydroxy-2-butanone 4-phosphate. This is the penultimate step in the biosynthesis of riboflavin. The sequence is that of 6,7-dimethyl-8-ribityllumazine synthase from Escherichia coli O45:K1 (strain S88 / ExPEC).